The sequence spans 296 residues: DNA repair protein complementing XP-A cells homolog (296 aa).

The segment covering 1 to 10 has biased composition (polar residues); that stretch reads MSAEVSTNES. The disordered stretch occupies residues 1–39; that stretch reads MSAEVSTNESAPPAEKKSKLTNAQKARIERNQAKAQKLR. The span at 26-39 shows a compositional bias: basic and acidic residues; the sequence is ARIERNQAKAQKLR. The short motif at 26–47 is the Nuclear localization signal element; that stretch reads ARIERNQAKAQKLREAKLVSHP. Zn(2+)-binding residues include C126, C129, C147, and C150. The segment at 126-150 is a zinc-finger region; it reads CLECGDMFADSYLFNNFGHSVCDKC.

It belongs to the XPA family. As to expression, strongly expressed in the central nervous system and muscles.

The protein resides in the nucleus. Involved in DNA excision repair. Initiates repair by binding to damaged sites with various affinities, depending on the photoproduct and the transcriptional state of the region. In Drosophila melanogaster (Fruit fly), this protein is DNA repair protein complementing XP-A cells homolog (Xpac).